The sequence spans 449 residues: Mitochondrial distribution and morphology protein 10 (449 aa).

2 disordered regions span residues 215–244 and 282–307; these read GPSEPVEDSEKSTAAPTKTRSGVKRIDEED and DATPPSFQLPSSSPTQPSLLAHGAPS. Residues 285–301 are compositionally biased toward low complexity; it reads PPSFQLPSSSPTQPSLL.

Belongs to the MDM10 family. Component of the ER-mitochondria encounter structure (ERMES) or MDM complex, composed of MMM1, MDM10, MDM12 and MDM34. Associates with the mitochondrial outer membrane sorting assembly machinery SAM(core) complex.

It localises to the mitochondrion outer membrane. In terms of biological role, component of the ERMES/MDM complex, which serves as a molecular tether to connect the endoplasmic reticulum and mitochondria. Components of this complex are involved in the control of mitochondrial shape and protein biogenesis and may function in phospholipid exchange. MDM10 is involved in the late assembly steps of the general translocase of the mitochondrial outer membrane (TOM complex). Functions in the TOM40-specific route of the assembly of outer membrane beta-barrel proteins, including the association of TOM40 with the receptor TOM22 and small TOM proteins. Can associate with the SAM(core) complex as well as the MDM12-MMM1 complex, both involved in late steps of the major beta-barrel assembly pathway, that is responsible for biogenesis of all outer membrane beta-barrel proteins. May act as a switch that shuttles between both complexes and channels precursor proteins into the TOM40-specific pathway. Plays a role in mitochondrial morphology and in the inheritance of mitochondria. This is Mitochondrial distribution and morphology protein 10 from Postia placenta (strain ATCC 44394 / Madison 698-R) (Brown rot fungus).